The following is a 340-amino-acid chain: Beta-ketoacyl-[acyl-carrier-protein] synthase III (340 aa).

Active-site residues include Cys-122 and His-260. The interval Gln-261–Arg-265 is ACP-binding. Residue Asn-291 is part of the active site.

It belongs to the thiolase-like superfamily. FabH family. In terms of assembly, homodimer.

The protein localises to the cytoplasm. The catalysed reaction is malonyl-[ACP] + acetyl-CoA + H(+) = 3-oxobutanoyl-[ACP] + CO2 + CoA. It functions in the pathway lipid metabolism; fatty acid biosynthesis. Functionally, catalyzes the condensation reaction of fatty acid synthesis by the addition to an acyl acceptor of two carbons from malonyl-ACP. Catalyzes the first condensation reaction which initiates fatty acid synthesis and may therefore play a role in governing the total rate of fatty acid production. Possesses both acetoacetyl-ACP synthase and acetyl transacylase activities. Its substrate specificity determines the biosynthesis of branched-chain and/or straight-chain of fatty acids. The sequence is that of Beta-ketoacyl-[acyl-carrier-protein] synthase III from Mycobacteroides abscessus (strain ATCC 19977 / DSM 44196 / CCUG 20993 / CIP 104536 / JCM 13569 / NCTC 13031 / TMC 1543 / L948) (Mycobacterium abscessus).